A 234-amino-acid polypeptide reads, in one-letter code: tRNA (guanine-N(1)-)-methyltransferase (234 aa).

S-adenosyl-L-methionine-binding positions include Gly112 and 132–137 (IGDFIL).

Belongs to the RNA methyltransferase TrmD family. Homodimer.

The protein resides in the cytoplasm. The catalysed reaction is guanosine(37) in tRNA + S-adenosyl-L-methionine = N(1)-methylguanosine(37) in tRNA + S-adenosyl-L-homocysteine + H(+). Specifically methylates guanosine-37 in various tRNAs. In Campylobacter jejuni (strain RM1221), this protein is tRNA (guanine-N(1)-)-methyltransferase.